The primary structure comprises 156 residues: 6,7-dimethyl-8-ribityllumazine synthase (156 aa).

5-amino-6-(D-ribitylamino)uracil-binding positions include Phe23, 57-59 (AFE), and 81-83 (AII). 86–87 (ST) serves as a coordination point for (2S)-2-hydroxy-3-oxobutyl phosphate. The active-site Proton donor is His89. Residue Phe114 participates in 5-amino-6-(D-ribitylamino)uracil binding. Arg128 is a binding site for (2S)-2-hydroxy-3-oxobutyl phosphate.

It belongs to the DMRL synthase family.

The catalysed reaction is (2S)-2-hydroxy-3-oxobutyl phosphate + 5-amino-6-(D-ribitylamino)uracil = 6,7-dimethyl-8-(1-D-ribityl)lumazine + phosphate + 2 H2O + H(+). It functions in the pathway cofactor biosynthesis; riboflavin biosynthesis; riboflavin from 2-hydroxy-3-oxobutyl phosphate and 5-amino-6-(D-ribitylamino)uracil: step 1/2. Its function is as follows. Catalyzes the formation of 6,7-dimethyl-8-ribityllumazine by condensation of 5-amino-6-(D-ribitylamino)uracil with 3,4-dihydroxy-2-butanone 4-phosphate. This is the penultimate step in the biosynthesis of riboflavin. In Wolinella succinogenes (strain ATCC 29543 / DSM 1740 / CCUG 13145 / JCM 31913 / LMG 7466 / NCTC 11488 / FDC 602W) (Vibrio succinogenes), this protein is 6,7-dimethyl-8-ribityllumazine synthase.